A 125-amino-acid polypeptide reads, in one-letter code: Large ribosomal subunit protein bL12 (125 aa).

This sequence belongs to the bacterial ribosomal protein bL12 family. Homodimer. Part of the ribosomal stalk of the 50S ribosomal subunit. Forms a multimeric L10(L12)X complex, where L10 forms an elongated spine to which 2 to 4 L12 dimers bind in a sequential fashion. Binds GTP-bound translation factors.

Forms part of the ribosomal stalk which helps the ribosome interact with GTP-bound translation factors. Is thus essential for accurate translation. The protein is Large ribosomal subunit protein bL12 of Gluconacetobacter diazotrophicus (strain ATCC 49037 / DSM 5601 / CCUG 37298 / CIP 103539 / LMG 7603 / PAl5).